The chain runs to 503 residues: Probable cytosol aminopeptidase (503 aa).

Positions 274 and 279 each coordinate Mn(2+). K286 is a catalytic residue. D297, D356, and E358 together coordinate Mn(2+). R360 is an active-site residue.

It belongs to the peptidase M17 family. Mn(2+) serves as cofactor.

The protein localises to the cytoplasm. It carries out the reaction Release of an N-terminal amino acid, Xaa-|-Yaa-, in which Xaa is preferably Leu, but may be other amino acids including Pro although not Arg or Lys, and Yaa may be Pro. Amino acid amides and methyl esters are also readily hydrolyzed, but rates on arylamides are exceedingly low.. The enzyme catalyses Release of an N-terminal amino acid, preferentially leucine, but not glutamic or aspartic acids.. In terms of biological role, presumably involved in the processing and regular turnover of intracellular proteins. Catalyzes the removal of unsubstituted N-terminal amino acids from various peptides. In Burkholderia cenocepacia (strain ATCC BAA-245 / DSM 16553 / LMG 16656 / NCTC 13227 / J2315 / CF5610) (Burkholderia cepacia (strain J2315)), this protein is Probable cytosol aminopeptidase.